The following is a 431-amino-acid chain: Adenylosuccinate synthetase (431 aa).

GTP is bound by residues 12–18 and 40–42; these read GDEGKGK and GHT. The active-site Proton acceptor is Asp-13. The Mg(2+) site is built by Asp-13 and Gly-40. IMP contacts are provided by residues 13–16, 38–41, Thr-129, Arg-143, Gln-224, Thr-239, and Arg-303; these read DEGK and NAGH. The Proton donor role is filled by His-41. Substrate is bound at residue 299–305; the sequence is VTTGRAR. GTP is bound by residues Arg-305, 331-333, and 413-415; these read KLD and GVG.

It belongs to the adenylosuccinate synthetase family. As to quaternary structure, homodimer. Requires Mg(2+) as cofactor.

The protein resides in the cytoplasm. The catalysed reaction is IMP + L-aspartate + GTP = N(6)-(1,2-dicarboxyethyl)-AMP + GDP + phosphate + 2 H(+). The protein operates within purine metabolism; AMP biosynthesis via de novo pathway; AMP from IMP: step 1/2. In terms of biological role, plays an important role in the de novo pathway of purine nucleotide biosynthesis. Catalyzes the first committed step in the biosynthesis of AMP from IMP. This is Adenylosuccinate synthetase from Mycobacterium sp. (strain KMS).